Consider the following 357-residue polypeptide: Isoflavone 7-O-methyltransferase (357 aa).

S-adenosyl-L-methionine-binding positions include 200–203 (VGGG), Asp-224, 224–225 (DR), 244–245 (DM), and Lys-258. The Proton acceptor role is filled by His-262.

Belongs to the class I-like SAM-binding methyltransferase superfamily. Cation-independent O-methyltransferase family. COMT subfamily.

The catalysed reaction is a 7-hydroxyisoflavone + S-adenosyl-L-methionine = a 7-methoxyisoflavone + S-adenosyl-L-homocysteine + H(+). In terms of biological role, 7-O-methyltransferase involved in the biosynthesis of isoformononetin. Can use daidzein as substrate, but not medicarpin or 2,7,4'-trihydroxyisoflavanone. This Glycyrrhiza echinata (Licorice) protein is Isoflavone 7-O-methyltransferase (D7OMT).